The primary structure comprises 243 residues: Pleckstrin homology domain-containing family B member 1 (243 aa).

The PH domain occupies 21-128 (ALVRGGWLWR…WKTALLEANS (108 aa)).

In terms of assembly, homodimer. Interacts (via PH domain) with MYO1C. Interacts (via PH domain) with MYO7A. Binds transducins. Highly expressed in retina and brain. Levels are very low or not detectable in all other tissues tested.

It is found in the membrane. The protein localises to the cytoplasm. The protein is Pleckstrin homology domain-containing family B member 1 (PLEKHB1) of Homo sapiens (Human).